The following is a 148-amino-acid chain: Protoporphyrinogen IX oxidase (148 aa).

4 consecutive transmembrane segments (helical) span residues 7–27, 59–79, 86–106, and 128–148; these read YFLW…AALF, FIAS…LLIA, GGWL…HFYC, and FNEI…VKPF. H15 contacts heme. K92 is a heme binding site.

It belongs to the HemJ family. As to quaternary structure, homodimer. The cofactor is heme b.

It is found in the cell membrane. It carries out the reaction protoporphyrinogen IX + 3 A = protoporphyrin IX + 3 AH2. It functions in the pathway porphyrin-containing compound metabolism; protoporphyrin-IX biosynthesis; protoporphyrin-IX from protoporphyrinogen-IX: step 1/1. Its function is as follows. Catalyzes the oxidation of protoporphyrinogen IX to protoporphyrin IX. Is involved in the biosynthesis of tetrapyrrole molecules like heme. Does not use oxygen or artificial electron acceptors such as menadione or benzoquinone. In Helicobacter pylori (strain J99 / ATCC 700824) (Campylobacter pylori J99), this protein is Protoporphyrinogen IX oxidase.